Consider the following 160-residue polypeptide: Transcription elongation factor GreA (160 aa).

The stretch at 1–72 forms a coiled coil; sequence MAEKTYPMTL…QISSLETKIR (72 aa).

It belongs to the GreA/GreB family.

Functionally, necessary for efficient RNA polymerase transcription elongation past template-encoded arresting sites. The arresting sites in DNA have the property of trapping a certain fraction of elongating RNA polymerases that pass through, resulting in locked ternary complexes. Cleavage of the nascent transcript by cleavage factors such as GreA or GreB allows the resumption of elongation from the new 3'terminus. GreA releases sequences of 2 to 3 nucleotides. In Streptococcus pneumoniae (strain ATCC 700669 / Spain 23F-1), this protein is Transcription elongation factor GreA.